We begin with the raw amino-acid sequence, 1021 residues long: Sodium/potassium-transporting ATPase subunit alpha-1 (1021 aa).

Residues 1–5 (MGKGG) constitute a propeptide that is removed on maturation. A compositionally biased stretch (basic and acidic residues) spans 1–11 (MGKGGGRDKYE). The segment at 1-37 (MGKGGGRDKYEPAAISEHGNKKKAKKERDMDELKKEV) is disordered. At 6–85 (GRDKYEPAAI…NALTPPPTTP (80 aa)) the chain is on the cytoplasmic side. N6-acetyllysine is present on Lys-9. Tyr-10 carries the phosphotyrosine modification. Residue Ser-16 is modified to Phosphoserine; by PKC. The residue at position 21 (Lys-21) is an N6-acetyllysine. Residues 26 to 37 (KERDMDELKKEV) are compositionally biased toward basic and acidic residues. Residues Ser-38 and Ser-45 each carry the phosphoserine modification. The tract at residues 80–82 (PPP) is phosphoinositide-3 kinase binding. The helical transmembrane segment at 86–106 (EWVKFCRQLFGGFSMLLWIGA) threads the bilayer. The Extracellular segment spans residues 107-129 (ILCFLAYGIQAATEEEPQNDNLY). Residues 130–150 (LGVVLSAVVIITGCFSYYQEA) traverse the membrane as a helical segment. Over 151-286 (KSSKIMESFK…GGQTPIAAEI (136 aa)) the chain is Cytoplasmic. A disordered region spans residues 214–233 (SSLTGESEPQTRSPDFTNEN). At Ser-226 the chain carries Phosphoserine. Phosphotyrosine is present on Tyr-258. A helical membrane pass occupies residues 287–306 (EHFIHIITGVAVFLGVTFFI). Residues 307 to 318 (LSLILEYTWLEA) are Extracellular-facing. Residues 319–336 (VIFLIGIIVANVPEGLLA) form a helical membrane-spanning segment. The Cytoplasmic segment spans residues 337-770 (TVTVCLTLTA…EEGRLIFDNL (434 aa)). The active-site 4-aspartylphosphate intermediate is the Asp-374. A phosphoserine mark is found at Ser-450 and Ser-482. Lys-485 contributes to the ATP binding site. Tyr-540 bears the Phosphotyrosine mark. Residues 594–715 (RAAVPDAVGK…QGAIVAVTGD (122 aa)) form a mediates interaction with SCN7A region. Lys-659 is subject to N6-succinyllysine. Residue Ser-666 is modified to Phosphoserine. Positions 715 and 719 each coordinate Mg(2+). The helical transmembrane segment at 771-790 (KKSIAYTLTSNIPEITPFLI) threads the bilayer. At 791–800 (FIIANIPLPL) the chain is on the extracellular side. Residues 801–821 (GTVTILCIDLGTDMVPAISLA) form a helical membrane-spanning segment. Over 822–841 (YEQAESDIMKRQPRNPQTDK) the chain is Cytoplasmic. The helical transmembrane segment at 842 to 864 (LVNERLISMAYGQIGMIQALGGF) threads the bilayer. At 865 to 916 (FTYFVILAENGFLPIHLLGLRVDWDDRWVNDVEDSYGQQWTYEQRKIVEFTC) the chain is on the extracellular side. A helical membrane pass occupies residues 917–936 (HTAFFVSIVVVQWADLVICK). Residues 937–949 (TRRNSVFQQGMKN) are Cytoplasmic-facing. Ser-941 is modified (phosphoserine; by PKA). A helical transmembrane segment spans residues 950 to 968 (KILIFGLFEETALAAFLSY). The Extracellular portion of the chain corresponds to 969-983 (CPGMGVALRMYPLKP). A helical membrane pass occupies residues 984–1004 (TWWFCAFPYSLLIFVYDEVRK). The Cytoplasmic segment spans residues 1005-1021 (LIIRRRPGGWVEKETYY).

Belongs to the cation transport ATPase (P-type) (TC 3.A.3) family. Type IIC subfamily. As to quaternary structure, the sodium/potassium-transporting ATPase is composed of a catalytic alpha subunit, an auxiliary non-catalytic beta subunit and an additional regulatory subunit. Interacts with regulatory subunit FXYD1. Interacts with regulatory subunit FXYD3. Interacts with SIK1. Interacts with SLC35G1 and STIM1. Interacts with CLN3; this interaction regulates the sodium/potassium-transporting ATPase complex localization at the plasma membrane. Interacts with SCN7A; activates ATP1A1 P-type sodium:potassium-exchanging transporter activity which indirectly signals to nearby neurons to regulate sodium homeostasis. Phosphorylation on Tyr-10 modulates pumping activity. Phosphorylation of Ser-941 by PKA modulates the response of ATP1A1 to PKC. Dephosphorylation by protein phosphatase 2A (PP2A) following increases in intracellular sodium, leading to increase catalytic activity.

The protein localises to the cell membrane. Its subcellular location is the basolateral cell membrane. The protein resides in the sarcolemma. It is found in the cell projection. It localises to the axon. The protein localises to the melanosome. It carries out the reaction K(+)(out) + Na(+)(in) + ATP + H2O = K(+)(in) + Na(+)(out) + ADP + phosphate + H(+). Its function is as follows. This is the catalytic component of the active enzyme, which catalyzes the hydrolysis of ATP coupled with the exchange of sodium and potassium ions across the plasma membrane. This action creates the electrochemical gradient of sodium and potassium ions, providing the energy for active transport of various nutrients. Could also be part of an osmosensory signaling pathway that senses body-fluid sodium levels and controls salt intake behavior as well as voluntary water intake to regulate sodium homeostasis. This Equus caballus (Horse) protein is Sodium/potassium-transporting ATPase subunit alpha-1 (ATP1A1).